A 328-amino-acid polypeptide reads, in one-letter code: Adenosine receptor A1 (328 aa).

At 1-10 (MPPSISAFQA) the chain is on the extracellular side. A helical membrane pass occupies residues 11–33 (AYIGIEVLIALVSVPGNVLVIWA). Over 34-46 (VKVNQALRDATFC) the chain is Cytoplasmic. A helical transmembrane segment spans residues 47–69 (FIVSLAVADVAVGALVIPLAILI). The Extracellular segment spans residues 70–80 (NIGPETYFHTC). The cysteines at positions 80 and 169 are disulfide-linked. A helical membrane pass occupies residues 81–102 (LMVACPVLILTQSSILALLAIA). Over 103 to 123 (VDRYLRVKIPLRYKAVVTPRR) the chain is Cytoplasmic. A helical membrane pass occupies residues 124 to 146 (AAVAIAGCWILSLVVGLTPMFGW). Residues 147-176 (NNLREVQRAWAANGSVGEPVIKCEFEKVIS) are Extracellular-facing. N-linked (GlcNAc...) asparagine glycosylation is present at Asn-159. A helical membrane pass occupies residues 177-201 (MEYMVYFNFFVWVLPPLLLMVLIYL). Topologically, residues 202–235 (EVFYLIRRQLSKKASASSGDPHKYYGKELKIAKS) are cytoplasmic. Residues 236-259 (LALILFLFALSWLPLHILNCVTLF) traverse the membrane as a helical segment. At 260–267 (CPSCQKPS) the chain is on the extracellular side. The helical transmembrane segment at 268 to 292 (ILVYTAIFLTHGNSAMNPIVYAFRI) threads the bilayer. The Cytoplasmic portion of the chain corresponds to 293 to 328 (HKFRVTFLKIWNDHFRCRPAPAGDGDEDLPEEKPND). Residue Cys-309 is the site of S-palmitoyl cysteine attachment.

It belongs to the G-protein coupled receptor 1 family.

It localises to the cell membrane. In terms of biological role, receptor for adenosine. The activity of this receptor is mediated by G proteins which inhibit adenylyl cyclase. This chain is Adenosine receptor A1 (ADORA1), found in Oryctolagus cuniculus (Rabbit).